The following is a 94-amino-acid chain: MANIKSAKKRILIAERNRLQNKAYKSAIKTFTKRFQAAVDDYKSNPSDDQLAAIQNEMSVTYSKIDKAVKVGVFHRNTGARKKAGLARILKAAT.

This sequence belongs to the bacterial ribosomal protein bS20 family.

Functionally, binds directly to 16S ribosomal RNA. The polypeptide is Small ribosomal subunit protein bS20 (Acaryochloris marina (strain MBIC 11017)).